A 235-amino-acid polypeptide reads, in one-letter code: Small ribosomal subunit protein uS2c (235 aa).

It belongs to the universal ribosomal protein uS2 family.

It is found in the plastid. The sequence is that of Small ribosomal subunit protein uS2c (rps2) from Euglena longa (Euglenophycean alga).